The following is a 365-amino-acid chain: MGDVDNLSLPTKLPDNAVVCLMAPTASGKTSLAYELYETGRFEIISVDSALIYKDMNIGTAKPTQSELEQYPHHLVDIIDPTQSYSVANFVSDTQQLVEQIHQRGKTPLLVGGTLMYYMALFNGLSPIPDTDPNVRAQVEAQRQQQGIEALHDYLSKIDPPLAERLPIGDTQRITRAIEVYQQTGKPLSYWQQLPKQALSDNPQQYWLGLAVMPDRAWLHERIALRLEMMWADGFFDEVGQLLTNYSLDAQMPSMRCVGYRQVIDYLIATDHPLISRLKINGQSVDNKGLEVNEAHKSIACQDMKNKALYATRQLAKRQYTWLRNLVASHQPSDTLQTSGAQTEQKVVHSFDTIQDAKAYLFSRL.

23–30 (APTASGKT) lines the ATP pocket. Position 25–30 (25–30 (TASGKT)) interacts with substrate. 3 interaction with substrate tRNA regions span residues 48 to 51 (DSAL), 172 to 176 (QRITR), and 256 to 261 (RCVGYR).

Belongs to the IPP transferase family. As to quaternary structure, monomer. The cofactor is Mg(2+).

The catalysed reaction is adenosine(37) in tRNA + dimethylallyl diphosphate = N(6)-dimethylallyladenosine(37) in tRNA + diphosphate. Its function is as follows. Catalyzes the transfer of a dimethylallyl group onto the adenine at position 37 in tRNAs that read codons beginning with uridine, leading to the formation of N6-(dimethylallyl)adenosine (i(6)A). This Psychrobacter sp. (strain PRwf-1) protein is tRNA dimethylallyltransferase.